The primary structure comprises 1178 residues: DNA-directed RNA polymerase subunit beta' (1178 aa).

Residues C60, C62, C75, and C78 each coordinate Zn(2+). 3 residues coordinate Mg(2+): D450, D452, and D454. The Zn(2+) site is built by C795, C869, C876, and C879.

The protein belongs to the RNA polymerase beta' chain family. In terms of assembly, the RNAP catalytic core consists of 2 alpha, 1 beta, 1 beta' and 1 omega subunit. When a sigma factor is associated with the core the holoenzyme is formed, which can initiate transcription. Mg(2+) serves as cofactor. Requires Zn(2+) as cofactor.

The catalysed reaction is RNA(n) + a ribonucleoside 5'-triphosphate = RNA(n+1) + diphosphate. Its function is as follows. DNA-dependent RNA polymerase catalyzes the transcription of DNA into RNA using the four ribonucleoside triphosphates as substrates. In Clostridium botulinum (strain ATCC 19397 / Type A), this protein is DNA-directed RNA polymerase subunit beta'.